The sequence spans 356 residues: Protein SEC13 homolog (356 aa).

WD repeat units follow at residues 11–50 (EHEDMVHHAALDFYGLLLATCSSDGSVRIFHSRKNNKALA), 54–95 (GHQG…DWTK), 101–142 (NHDS…GVWD), 149–205 (AHTI…WVEE), 210–253 (AHSD…SEWT), and 259–298 (TFDDAVWSISWSTTGNILAVTGGDNNVTLWKENTEGQWIR). Residues 307–356 (IQSKQPSHLPHSHSQQQQALQQHQQQAPSHPGPSSDSEHSSNLSNSQLSN) are disordered. The span at 308-356 (QSKQPSHLPHSHSQQQQALQQHQQQAPSHPGPSSDSEHSSNLSNSQLSN) shows a compositional bias: low complexity.

The protein belongs to the WD repeat SEC13 family. As to quaternary structure, probable component of the nuclear pore complex (NPC). Component of the GATOR complex consisting of mio, Nup44A/Seh1, Im11, Nplr3, Nplr2, Wdr24, Wdr59 and Sec13. Within the GATOR complex, probable component of the GATOR2 subcomplex which is likely composed of mio, Nup44A/Seh1, Wdr24, Wdr59 and Sec13. Interacts with msk. Interacts (preferentially when phosphorylated) with Mad. The GATOR2 complex associates with unmet in the absence of S-adenosyl-L-methionine; the mio-Wdr24-Nup44A subcomplex is essential and sufficient for this interaction while Wdr59 and Sec13 are dispensable. This association acts as a nutrient sensor to inhibit mTORC1 signaling in the absence of methionine. As to expression, salivary glands.

The protein resides in the nucleus envelope. It is found in the nucleus. It localises to the nucleoplasm. The protein localises to the cytoplasm. Its subcellular location is the cytoskeleton. The protein resides in the microtubule organizing center. It is found in the centrosome. It localises to the nuclear pore complex. The protein localises to the cytoplasmic vesicle. Its subcellular location is the COPII-coated vesicle membrane. The protein resides in the endoplasmic reticulum membrane. It is found in the lysosome membrane. Functionally, functions as a component of the nuclear pore complex (NPC) and the COPII coat. At the endoplasmic reticulum, SEC13 is involved in the biogenesis of COPII-coated vesicles. Recruited to transcriptionally active chromatin at the time of transcription initiation by RNA polymerase II. Required for proper expression of ecdysone-responsive genes such as Eip74EF and Eip75B during larval development. Required for reactivation of transcription after heat shock. Required for nuclear import of phosphorylated Mad via importin msk. Has no role in classical nuclear localization signal (cNLS)-dependent nuclear import via importin-beta. In terms of biological role, a component of the GATOR subcomplex GATOR2 which functions as an activator of the amino acid-sensing branch of the mTORC1 signaling pathway. The two GATOR subcomplexes, GATOR1 and GATOR2, regulate the mTORC1 pathway in order to mediate metabolic homeostasis, female gametogenesis and the response to amino acid limitation and complete starvation. GATOR2 activates the mTORC1 signaling pathway through the inhibition of the GATOR1 subcomplex, controlling the switch to cell proliferation and growth under nutrient replete conditions and during female oocyte development. The sequence is that of Protein SEC13 homolog from Drosophila melanogaster (Fruit fly).